Here is a 154-residue protein sequence, read N- to C-terminus: MGSVLVDLQIATENIEGLPTEEQIVQWATAAIQPEGNEVEMTVRIVDEAESHELNLTYRGKDRPTNVLSFPFECPDEVELPLLGDLVICRQVVEREAAEQEKPLMAHWAHMVVHGGLHLLGYDHIEDDEAEEMESLETQIMQGLGFDDPYLAEK.

Zn(2+)-binding residues include histidine 114, histidine 118, and histidine 124.

It belongs to the endoribonuclease YbeY family. Zn(2+) is required as a cofactor.

It is found in the cytoplasm. Functionally, single strand-specific metallo-endoribonuclease involved in late-stage 70S ribosome quality control and in maturation of the 3' terminus of the 16S rRNA. This chain is Endoribonuclease YbeY, found in Haemophilus influenzae (strain PittEE).